The sequence spans 295 residues: Glycine N-methyltransferase (295 aa).

(6S)-5-methyl-5,6,7,8-tetrahydrofolate-binding residues include S4 and Y6. A Phosphoserine modification is found at S10. Y22, W31, Y34, and R41 together coordinate S-adenosyl-L-methionine. The residue at position 34 (Y34) is a Phosphotyrosine. N6-succinyllysine is present on K46. Residues A65, 86 to 88 (DAS), 117 to 118 (NW), 139 to 142 (LGNS), and R178 contribute to the S-adenosyl-L-methionine site. N6-succinyllysine is present on residues K193, K198, and K203. H217 is a (6S)-5-methyl-5,6,7,8-tetrahydrofolate binding site. Y223 is a binding site for S-adenosyl-L-methionine. Position 242 (R242) interacts with (6S)-5-methyl-5,6,7,8-tetrahydrofolate.

It belongs to the class I-like SAM-binding methyltransferase superfamily. Glycine N-methyltransferase family. Homotetramer. Abundant in liver.

The protein localises to the cytoplasm. The enzyme catalyses glycine + S-adenosyl-L-methionine = sarcosine + S-adenosyl-L-homocysteine + H(+). Inhibited by 5-methyltetrahydrofolate monoglutamate and by 5-methyltetrahydrofolate pentaglutamate, inhibition is much more effective by the pentaglutamate form than by the monoglutamate form. Two molecules of 5-methyltetrahydrofolate are bound per tetramer. The binding sites are localized between subunits. Inhibitor binding may preclude movements of the polypeptide chain that are necessary for enzyme activity. Functionally, catalyzes the methylation of glycine by using S-adenosylmethionine (AdoMet) to form N-methylglycine (sarcosine) with the concomitant production of S-adenosylhomocysteine (AdoHcy), a reaction regulated by the binding of 5-methyltetrahydrofolate. Plays an important role in the regulation of methyl group metabolism by regulating the ratio between S-adenosyl-L-methionine and S-adenosyl-L-homocysteine. In Oryctolagus cuniculus (Rabbit), this protein is Glycine N-methyltransferase (GNMT).